We begin with the raw amino-acid sequence, 205 residues long: High frequency lysogenization protein HflD homolog (205 aa).

This sequence belongs to the HflD family.

The protein resides in the cytoplasm. It is found in the cell inner membrane. In Shewanella baltica (strain OS185), this protein is High frequency lysogenization protein HflD homolog.